The following is a 238-amino-acid chain: Ribosomal RNA small subunit methyltransferase G (238 aa).

Residues glycine 80, 131–132, and arginine 148 each bind S-adenosyl-L-methionine; that span reads AE.

It belongs to the methyltransferase superfamily. RNA methyltransferase RsmG family.

The protein localises to the cytoplasm. Specifically methylates the N7 position of a guanine in 16S rRNA. This chain is Ribosomal RNA small subunit methyltransferase G, found in Thermotoga maritima (strain ATCC 43589 / DSM 3109 / JCM 10099 / NBRC 100826 / MSB8).